Consider the following 493-residue polypeptide: ATP synthase subunit beta (493 aa).

169-176 (GGAGVGKT) is a binding site for ATP.

The protein belongs to the ATPase alpha/beta chains family. As to quaternary structure, F-type ATPases have 2 components, CF(1) - the catalytic core - and CF(0) - the membrane proton channel. CF(1) has five subunits: alpha(3), beta(3), gamma(1), delta(1), epsilon(1). CF(0) has three main subunits: a(1), b(2) and c(9-12). The alpha and beta chains form an alternating ring which encloses part of the gamma chain. CF(1) is attached to CF(0) by a central stalk formed by the gamma and epsilon chains, while a peripheral stalk is formed by the delta and b chains.

It localises to the cell inner membrane. The enzyme catalyses ATP + H2O + 4 H(+)(in) = ADP + phosphate + 5 H(+)(out). Functionally, produces ATP from ADP in the presence of a proton gradient across the membrane. The catalytic sites are hosted primarily by the beta subunits. This Gluconacetobacter diazotrophicus (strain ATCC 49037 / DSM 5601 / CCUG 37298 / CIP 103539 / LMG 7603 / PAl5) protein is ATP synthase subunit beta.